Here is a 265-residue protein sequence, read N- to C-terminus: tRNA pseudouridine synthase A (265 aa).

Aspartate 58 (nucleophile) is an active-site residue. Tyrosine 116 serves as a coordination point for substrate.

The protein belongs to the tRNA pseudouridine synthase TruA family. As to quaternary structure, homodimer.

It catalyses the reaction uridine(38/39/40) in tRNA = pseudouridine(38/39/40) in tRNA. Functionally, formation of pseudouridine at positions 38, 39 and 40 in the anticodon stem and loop of transfer RNAs. This chain is tRNA pseudouridine synthase A, found in Neisseria gonorrhoeae (strain NCCP11945).